The chain runs to 289 residues: Cysteine-rich venom protein Mr30 (289 aa).

A signal peptide spans 1–24; it reads MLSTMQTVGAILMLSIVFVAGTKR. Residue E33 is modified to 4-carboxyglutamate. Positions 62–184 constitute an SCP domain; the sequence is VRMHNVIRAT…GEDRYFVCNY (123 aa).

This sequence belongs to the CRISP family. Contains 11 disulfide bonds. As to expression, expressed by the venom duct.

Its subcellular location is the secreted. Its function is as follows. Has no proteolytic activity. This chain is Cysteine-rich venom protein Mr30, found in Conus marmoreus (Marble cone).